We begin with the raw amino-acid sequence, 514 residues long: Cytochrome P450 71AP13 (514 aa).

Residues 20–37 traverse the membrane as a helical segment; that stretch reads HSSLFAFSLLILLLKFIY. Asn127 and Asn184 each carry an N-linked (GlcNAc...) asparagine glycan. Cys455 serves as a coordination point for heme.

This sequence belongs to the cytochrome P450 family. The cofactor is heme. As to expression, expressed in fruit kernel, seedlings, leaves and stems.

It is found in the membrane. The sequence is that of Cytochrome P450 71AP13 from Prunus mume (Japanese apricot).